A 126-amino-acid chain; its full sequence is Holo-[acyl-carrier-protein] synthase (126 aa).

Mg(2+) is bound by residues aspartate 9 and glutamate 58.

This sequence belongs to the P-Pant transferase superfamily. AcpS family. As to quaternary structure, homodimer. Requires Mg(2+) as cofactor.

It is found in the cytoplasm. It carries out the reaction apo-[ACP] + CoA = holo-[ACP] + adenosine 3',5'-bisphosphate + H(+). Transfers the 4'-phosphopantetheine moiety from coenzyme A to the 'Ser-36' of acyl-carrier-protein. The polypeptide is Holo-[acyl-carrier-protein] synthase (Escherichia coli O157:H7).